Here is a 938-residue protein sequence, read N- to C-terminus: Isoleucine--tRNA ligase (938 aa).

The 'HIGH' region signature appears at 61–71; it reads PYANGDIHLGT. Glu-559 is a binding site for L-isoleucyl-5'-AMP. The 'KMSKS' region signature appears at 601–605; sequence KMSKS. An ATP-binding site is contributed by Lys-604. The Zn(2+) site is built by Cys-904, Cys-907, Cys-923, and Cys-926.

It belongs to the class-I aminoacyl-tRNA synthetase family. IleS type 1 subfamily. Monomer. The cofactor is Zn(2+).

The protein localises to the cytoplasm. It carries out the reaction tRNA(Ile) + L-isoleucine + ATP = L-isoleucyl-tRNA(Ile) + AMP + diphosphate. In terms of biological role, catalyzes the attachment of isoleucine to tRNA(Ile). As IleRS can inadvertently accommodate and process structurally similar amino acids such as valine, to avoid such errors it has two additional distinct tRNA(Ile)-dependent editing activities. One activity is designated as 'pretransfer' editing and involves the hydrolysis of activated Val-AMP. The other activity is designated 'posttransfer' editing and involves deacylation of mischarged Val-tRNA(Ile). The chain is Isoleucine--tRNA ligase from Symbiobacterium thermophilum (strain DSM 24528 / JCM 14929 / IAM 14863 / T).